The sequence spans 171 residues: Sec-independent protein translocase protein TatB (171 aa).

A helical membrane pass occupies residues 1 to 21 (MFDIGFSELLLVFIIGLVVLG). The tract at residues 117 to 171 (KDNETAHEGVTPAAAQTQASSPEQKPETTPEPVVKPAADAEPKTAAPSPSSSDKP) is disordered. A compositionally biased stretch (polar residues) spans 130-139 (AAQTQASSPE).

It belongs to the TatB family. As to quaternary structure, the Tat system comprises two distinct complexes: a TatABC complex, containing multiple copies of TatA, TatB and TatC subunits, and a separate TatA complex, containing only TatA subunits. Substrates initially bind to the TatABC complex, which probably triggers association of the separate TatA complex to form the active translocon.

It localises to the cell inner membrane. In terms of biological role, part of the twin-arginine translocation (Tat) system that transports large folded proteins containing a characteristic twin-arginine motif in their signal peptide across membranes. Together with TatC, TatB is part of a receptor directly interacting with Tat signal peptides. TatB may form an oligomeric binding site that transiently accommodates folded Tat precursor proteins before their translocation. The protein is Sec-independent protein translocase protein TatB of Escherichia coli O6:K15:H31 (strain 536 / UPEC).